The following is a 142-amino-acid chain: Truncated non-functional hemagglutinin-esterase homolog (142 aa).

Residues 1-117 lie on the Virion surface side of the membrane; it reads MNFTVPVQAI…ESVDVISSSY (117 aa). N2 carries N-linked (GlcNAc...) asparagine; by host glycosylation. C28 and C33 are disulfide-bonded. N-linked (GlcNAc...) asparagine; by host glycans are attached at residues N46 and N67. C70 and C95 are oxidised to a cystine. Residues 118 to 138 form a helical membrane-spanning segment; sequence FVATWVLLVVVIILVFIIISF. Residues 139–142 are Intravirion-facing; sequence CISN.

This sequence belongs to the influenza type C/coronaviruses hemagglutinin-esterase family. Homodimer. Post-translationally, N-glycosylated.

Its subcellular location is the virion membrane. It localises to the host cell membrane. The protein is Truncated non-functional hemagglutinin-esterase homolog (HE) of Berne virus (BEV).